The primary structure comprises 433 residues: 23S rRNA (uracil(1939)-C(5))-methyltransferase RlmD (433 aa).

The TRAM domain maps to 10–68 (RTTTRQIITVSVNDLDSFGQGVARHNGKTLFIPGLLPQENAEVAVTEDKKQYARAKVVR). Cys81, Cys87, Cys90, and Cys162 together coordinate [4Fe-4S] cluster. S-adenosyl-L-methionine-binding residues include Gln265, Phe294, Asn299, Glu315, Asn342, and Asp363. The Nucleophile role is filled by Cys389.

This sequence belongs to the class I-like SAM-binding methyltransferase superfamily. RNA M5U methyltransferase family. RlmD subfamily.

It catalyses the reaction uridine(1939) in 23S rRNA + S-adenosyl-L-methionine = 5-methyluridine(1939) in 23S rRNA + S-adenosyl-L-homocysteine + H(+). Catalyzes the formation of 5-methyl-uridine at position 1939 (m5U1939) in 23S rRNA. This Shigella flexneri serotype 5b (strain 8401) protein is 23S rRNA (uracil(1939)-C(5))-methyltransferase RlmD.